A 423-amino-acid chain; its full sequence is MFS-type transporter phiL (423 aa).

Transmembrane regions (helical) follow at residues 25 to 45 (IFCF…NSFI), 82 to 102 (IGLA…LGGV), and 111 to 131 (YIFV…IIFF). Residues Asn-141 and Asn-151 are each glycosylated (N-linked (GlcNAc...) asparagine). Residues 166-185 (DHASGRNLPNAGSKKSNPRN) form a disordered region. The next 4 helical transmembrane spans lie at 203-223 (VIIF…SLSY), 238-258 (LSYI…GFVV), 298-318 (IAVP…WTMS), and 321-341 (LPPI…TAAY). N-linked (GlcNAc...) asparagine glycosylation occurs at Asn-352. The next 2 membrane-spanning stretches (helical) occupy residues 369–389 (LLGA…GMGW) and 390–410 (TFTA…FLLF).

It belongs to the major facilitator superfamily. CAR1 family.

The protein resides in the membrane. Its function is as follows. MFS-type transporter; part of the gene cluster that mediates the biosynthesis of the antihypercholesterolemic agents phomoidrides which are dimeric anhydrides. This chain is MFS-type transporter phiL, found in Fungal sp. (strain ATCC 74256).